The sequence spans 485 residues: Glutamyl-tRNA(Gln) amidotransferase subunit A (485 aa).

Active-site charge relay system residues include Lys-78 and Ser-153. Ser-177 functions as the Acyl-ester intermediate in the catalytic mechanism.

The protein belongs to the amidase family. GatA subfamily. In terms of assembly, heterotrimer of A, B and C subunits.

It carries out the reaction L-glutamyl-tRNA(Gln) + L-glutamine + ATP + H2O = L-glutaminyl-tRNA(Gln) + L-glutamate + ADP + phosphate + H(+). Its function is as follows. Allows the formation of correctly charged Gln-tRNA(Gln) through the transamidation of misacylated Glu-tRNA(Gln) in organisms which lack glutaminyl-tRNA synthetase. The reaction takes place in the presence of glutamine and ATP through an activated gamma-phospho-Glu-tRNA(Gln). In Bacillus mycoides (strain KBAB4) (Bacillus weihenstephanensis), this protein is Glutamyl-tRNA(Gln) amidotransferase subunit A.